A 362-amino-acid chain; its full sequence is Porin Omp2b (362 aa).

Residues M1–A22 form the signal peptide.

The protein belongs to the alphaproteobacteria porin family. As to quaternary structure, homotrimer.

It localises to the cell outer membrane. Functionally, forms passive diffusion pores that allow small molecular weight hydrophilic materials across the outer membrane. The protein is Porin Omp2b (omp2b) of Brucella melitensis biotype 1 (strain ATCC 23456 / CCUG 17765 / NCTC 10094 / 16M).